The following is a 505-amino-acid chain: uncharacterized protein (505 aa).

Histidine 431 acts as the Proton acceptor in catalysis.

It belongs to the GMC oxidoreductase family. It depends on FAD as a cofactor.

This is an uncharacterized protein from Sinorhizobium fredii (strain NBRC 101917 / NGR234).